The sequence spans 352 residues: tRNA N6-adenosine threonylcarbamoyltransferase (352 aa).

Residues His117 and His121 each contribute to the Fe cation site. Substrate contacts are provided by residues 140–144, Asp173, Gly186, and Asn287; that span reads LVSGG. Asp315 is a binding site for Fe cation.

This sequence belongs to the KAE1 / TsaD family. Requires Fe(2+) as cofactor.

The protein localises to the cytoplasm. The enzyme catalyses L-threonylcarbamoyladenylate + adenosine(37) in tRNA = N(6)-L-threonylcarbamoyladenosine(37) in tRNA + AMP + H(+). Required for the formation of a threonylcarbamoyl group on adenosine at position 37 (t(6)A37) in tRNAs that read codons beginning with adenine. Is involved in the transfer of the threonylcarbamoyl moiety of threonylcarbamoyl-AMP (TC-AMP) to the N6 group of A37, together with TsaE and TsaB. TsaD likely plays a direct catalytic role in this reaction. The polypeptide is tRNA N6-adenosine threonylcarbamoyltransferase (Psychrobacter cryohalolentis (strain ATCC BAA-1226 / DSM 17306 / VKM B-2378 / K5)).